Reading from the N-terminus, the 424-residue chain is Serine--tRNA ligase (424 aa).

An L-serine-binding site is contributed by 232–234 (TAE). 263–265 (RRE) is a binding site for ATP. L-serine is bound at residue E286. Position 350 to 353 (350 to 353 (EISS)) interacts with ATP. An L-serine-binding site is contributed by S384.

The protein belongs to the class-II aminoacyl-tRNA synthetase family. Type-1 seryl-tRNA synthetase subfamily. In terms of assembly, homodimer. The tRNA molecule binds across the dimer.

The protein resides in the cytoplasm. It catalyses the reaction tRNA(Ser) + L-serine + ATP = L-seryl-tRNA(Ser) + AMP + diphosphate + H(+). It carries out the reaction tRNA(Sec) + L-serine + ATP = L-seryl-tRNA(Sec) + AMP + diphosphate + H(+). It functions in the pathway aminoacyl-tRNA biosynthesis; selenocysteinyl-tRNA(Sec) biosynthesis; L-seryl-tRNA(Sec) from L-serine and tRNA(Sec): step 1/1. Its function is as follows. Catalyzes the attachment of serine to tRNA(Ser). Is also able to aminoacylate tRNA(Sec) with serine, to form the misacylated tRNA L-seryl-tRNA(Sec), which will be further converted into selenocysteinyl-tRNA(Sec). In Prochlorococcus marinus subsp. pastoris (strain CCMP1986 / NIES-2087 / MED4), this protein is Serine--tRNA ligase.